Reading from the N-terminus, the 197-residue chain is Recombination protein RecR (197 aa).

Residues 55-70 (CVQCRDFTESEVCAIC) form a C4-type zinc finger. The region spanning 78–173 (QQLCVVESPA…RPSRLAQGMP (96 aa)) is the Toprim domain.

It belongs to the RecR family.

May play a role in DNA repair. It seems to be involved in an RecBC-independent recombinational process of DNA repair. It may act with RecF and RecO. The polypeptide is Recombination protein RecR (Xanthomonas campestris pv. campestris (strain 8004)).